Reading from the N-terminus, the 533-residue chain is AAA-ATPase At5g17740 (533 aa).

Residues 11 to 27 form a helical membrane-spanning segment; sequence ASMFSTYASMMGYVMII. ATP is bound at residue 252-259; it reads GPPGTGKS.

It belongs to the AAA ATPase family. BCS1 subfamily. Mg(2+) is required as a cofactor.

The protein localises to the membrane. It carries out the reaction ATP + H2O = ADP + phosphate + H(+). The chain is AAA-ATPase At5g17740 from Arabidopsis thaliana (Mouse-ear cress).